A 371-amino-acid chain; its full sequence is Palmitoyl-monogalactosyldiacylglycerol delta-7 desaturase, chloroplastic (371 aa).

Residues 1–67 (MASLLTKPKP…KGLKRDVTTA (67 aa)) constitute a chloroplast transit peptide. The next 2 membrane-spanning stretches (helical) occupy residues 103–123 (FGAV…PFQF) and 127–147 (AVSV…TLSF). The Histidine box-1 motif lies at 148–153 (HRNLSH). Positions 185 to 189 (HRYHH) match the Histidine box-2 motif. The chain crosses the membrane as a helical span at residues 251-271 (ALAVALYAMGGFPFIVWGMGV). A Histidine box-3 motif is present at residues 317–321 (HNNHH).

It belongs to the fatty acid desaturase type 1 family. The cofactor is Fe(2+). As to expression, highly expressed in young leaves. Low expression in roots.

The protein localises to the plastid. It localises to the chloroplast membrane. The catalysed reaction is a 1-acyl-2-hexadecanoyl-glycerolipid + 2 reduced [2Fe-2S]-[ferredoxin] + O2 + 2 H(+) = a 1-acyl-2-[(7Z)-hexadecenoyl]-glycerolipid + 2 oxidized [2Fe-2S]-[ferredoxin] + 2 H2O. The protein operates within lipid metabolism; oxylipin biosynthesis. It functions in the pathway lipid metabolism; polyunsaturated fatty acid biosynthesis. In terms of biological role, fatty acid desaturase involved in the first desaturation step leading to the formation of hexadeca 7,10,13-trienoic acid (16:3(7Z,10Z,13Z)), the major functional components of thylakoid membranes. Required for chloroplast biogenesis at low temperature. Also indirectly involved in the production of the oxylipin dinor-oxo-phyto-dienoic acid implicated in wound signaling. This Arabidopsis thaliana (Mouse-ear cress) protein is Palmitoyl-monogalactosyldiacylglycerol delta-7 desaturase, chloroplastic.